We begin with the raw amino-acid sequence, 166 residues long: Regulatory protein RecX (166 aa).

This sequence belongs to the RecX family.

Its subcellular location is the cytoplasm. In terms of biological role, modulates RecA activity. This is Regulatory protein RecX from Salmonella agona (strain SL483).